The sequence spans 1432 residues: ABC transporter asL7 (1432 aa).

Polar residues predominate over residues Met1–Thr20. Positions Met1–Pro36 are disordered. The ABC transporter 1 domain occupies Leu91–Ser341. Asn265 carries N-linked (GlcNAc...) asparagine glycosylation. 6 helical membrane-spanning segments follow: residues Pro450–Phe470, Val484–Leu504, Val530–Phe550, Gly559–Phe579, Met597–Ile617, and Ile702–Tyr722. Positions Phe786–Ala1029 constitute an ABC transporter 2 domain. Gly822–Thr829 contributes to the ATP binding site. A glycan (N-linked (GlcNAc...) asparagine) is linked at Asn1017. The tract at residues Leu1076–Glu1095 is disordered. Transmembrane regions (helical) follow at residues Phe1135–Ser1155, Val1166–Ile1186, Ile1215–Leu1235, Leu1251–Ile1271, Ala1279–Ile1299, and Leu1317–Ala1337. N-linked (GlcNAc...) asparagine glycosylation is present at Asn1371. Residues Phe1402–Val1422 traverse the membrane as a helical segment.

It belongs to the ABC transporter superfamily. ABCG family. PDR (TC 3.A.1.205) subfamily.

It is found in the cell membrane. ABC transporter; part of the gene cluster that mediates the biosynthesis of xenovulene A, an unusual meroterpenoid that has potent inhibitory effects on the human gamma-aminobutyrate A (GABAA) benzodiazepine receptor. This is ABC transporter asL7 from Sarocladium schorii (Acremonium strictum (strain IMI 501407)).